A 164-amino-acid chain; its full sequence is Protein DOWNSTREAM OF FLC (164 aa).

The signal sequence occupies residues 1–23 (MAKSFVPLIAVLCVLVLPLAAMA). 3 cysteine pairs are disulfide-bonded: cysteine 36–cysteine 107, cysteine 39–cysteine 148, and cysteine 60–cysteine 95.

Belongs to the Ole e I family.

Its subcellular location is the secreted. Functionally, part of a three-gene cluster containing FLC, UFC and DFC, which is coordinately regulated in response to vernalization. Not regulated by FLX. The sequence is that of Protein DOWNSTREAM OF FLC (DFC) from Arabidopsis thaliana (Mouse-ear cress).